Reading from the N-terminus, the 290-residue chain is Protein MGF 110-9L (290 aa).

Transmembrane regions (helical) follow at residues 1 to 19 (MKVI…VIQS), 128 to 148 (TENI…IGYI), and 163 to 183 (LLIF…IIMN). N-linked (GlcNAc...) asparagine; by host glycans are attached at residues asparagine 242 and asparagine 267.

It belongs to the asfivirus MGF 110 family.

Its subcellular location is the host membrane. Functionally, plays a role in virus cell tropism, and may be required for efficient virus replication in macrophages. The chain is Protein MGF 110-9L from Ornithodoros (relapsing fever ticks).